Reading from the N-terminus, the 160-residue chain is Cytochrome b6-f complex subunit 4 (160 aa).

The Cytoplasmic portion of the chain corresponds to 1 to 35 (MATLKKPDLSDPKLRAKLAKGMGHNYYGEPAWPND). Residues 36 to 56 (LLYVFPVVIMGTFACIVALSV) traverse the membrane as a helical segment. At 57 to 94 (LDPAMVGEPADPFATPLEILPEWYLYPVFQILRSVPNK) the chain is on the lumenal, thylakoid side. A helical transmembrane segment spans residues 95–115 (LLGVLLMASVPLGLILVPFIE). Residues 116 to 130 (NVNKFQNPFRRPVAT) lie on the Cytoplasmic side of the membrane. Residues 131–151 (TIFLFGTLVTIWLGIGATFPL) form a helical membrane-spanning segment. Residues 152–160 (DKTLTLGLF) lie on the Lumenal, thylakoid side of the membrane.

The protein belongs to the cytochrome b family. PetD subfamily. The 4 large subunits of the cytochrome b6-f complex are cytochrome b6, subunit IV (17 kDa polypeptide, PetD), cytochrome f and the Rieske protein, while the 4 small subunits are PetG, PetL, PetM and PetN. The complex functions as a dimer.

Its subcellular location is the cellular thylakoid membrane. Its function is as follows. Component of the cytochrome b6-f complex, which mediates electron transfer between photosystem II (PSII) and photosystem I (PSI), cyclic electron flow around PSI, and state transitions. The polypeptide is Cytochrome b6-f complex subunit 4 (Mastigocladus laminosus (Fischerella sp.)).